Consider the following 199-residue polypeptide: V-type proton ATPase subunit E (199 aa).

It belongs to the V-ATPase E subunit family.

In terms of biological role, produces ATP from ADP in the presence of a proton gradient across the membrane. The protein is V-type proton ATPase subunit E of Clostridium botulinum (strain Okra / Type B1).